Here is a 508-residue protein sequence, read N- to C-terminus: MSQEKYIMAIDQGTTSSRAIIFNQKGEKVSSSQKEFPQIFPHAGWVEHNANQIWNSVQSVIAGAFIESSIKPSQIEAIGITNQRETTVVWDKKTGVPIYNAIVWQSRQTAPIAEQLKQDGHTKMIHEKTGLVIDAYFSATKIRWILDHVPGAQERAEKGELLFGTIDTWLVWKLTDGAVHVTDYSNAARTMLYNIKDLTWDDEILELLNIPKDMLPEVKSNSEIYGKTAAFHFYGGEVPISGMAGDQQAALFGQLAFEPGMVKNTYGTGSFIIMNTGDEMQLSSNNLLTTIGYGINGKVHYALEGSIFIAGSAIQWLRDGLKMIETSPESEQFALASTSDDEVYVVPAFTGLGAPYWDSNARGSVFGLTRGTSKEDFVKATLQSIAYQVRDVIDTMQVDSGIDIQQLRVDGGAAMNNMLMQFQADILGIDIARAKNLETTALGAAFLAGLAVGYWEDMDALKELNATGQLFKASMNESRKEKLYKGWKRAVKATQVFTQEEDADDDAK.

Position 14 (threonine 14) interacts with ADP. ATP is bound by residues threonine 14, threonine 15, and serine 16. Residue threonine 14 coordinates sn-glycerol 3-phosphate. Arginine 18 lines the ADP pocket. 3 residues coordinate sn-glycerol 3-phosphate: arginine 84, glutamate 85, and tyrosine 136. Glycerol-binding residues include arginine 84, glutamate 85, and tyrosine 136. Phosphohistidine; by HPr is present on histidine 232. Aspartate 246 is a binding site for sn-glycerol 3-phosphate. Positions 246 and 247 each coordinate glycerol. Residues threonine 268 and glycine 311 each coordinate ADP. The ATP site is built by threonine 268, glycine 311, glutamine 315, and glycine 412. The ADP site is built by glycine 412 and asparagine 416.

The protein belongs to the FGGY kinase family. As to quaternary structure, homotetramer and homodimer (in equilibrium). In terms of processing, the phosphoenolpyruvate-dependent sugar phosphotransferase system (PTS), including enzyme I, and histidine-containing protein (HPr) are required for the phosphorylation, which leads to the activation of the enzyme.

It catalyses the reaction glycerol + ATP = sn-glycerol 3-phosphate + ADP + H(+). It functions in the pathway polyol metabolism; glycerol degradation via glycerol kinase pathway; sn-glycerol 3-phosphate from glycerol: step 1/1. With respect to regulation, activated by phosphorylation and inhibited by fructose 1,6-bisphosphate (FBP). Functionally, key enzyme in the regulation of glycerol uptake and metabolism. Catalyzes the phosphorylation of glycerol to yield sn-glycerol 3-phosphate. This Streptococcus pyogenes serotype M12 (strain MGAS2096) protein is Glycerol kinase.